A 566-amino-acid chain; its full sequence is Autophagy-related protein 22-1 (566 aa).

The chain crosses the membrane as a helical span at residues 38 to 58; the sequence is YPIAAEVFAVVAVGAFLPVIL. A glycan (N-linked (GlcNAc...) asparagine) is linked at N103. 3 helical membrane passes run 110–130, 146–168, and 179–199; these read SFAMYTFSAAVIVQAVTLVCF, AFAYTGSVASALFIFISPTVYFL, and SLGCSFVLLNAFLPLLVANHA. An N-linked (GlcNAc...) asparagine glycan is attached at N200. The next 8 helical transmembrane spans lie at 242–262, 278–298, 351–371, 382–402, 416–436, 451–471, 488–510, and 519–539; these read GYGYMAAVFVQVISILILWLF, VILLLVGMWWAALTTPTLLWL, FLISWFLLSDAVATISGTAVL, IAIALLSITSIGSGIIGAFAW, ILLCCVAGMEMIPLYGLLGFI, WEIYPVAVLHGIVMGGVSSYA, FALYAVTDKGSSAFGPALVGWLV, and AFIFLAVLVVLPAPLLWMLDV. The disordered stretch occupies residues 547 to 566; that stretch reads KAMADGEGRGRGTYERVREE.

This sequence belongs to the ATG22 family.

The protein localises to the vacuole membrane. Functionally, vacuolar effluxer which mediate the efflux of amino acids resulting from autophagic degradation. The release of autophagic amino acids allows the maintenance of protein synthesis and viability during nitrogen starvation. The sequence is that of Autophagy-related protein 22-1 (ATG22-1) from Phaeosphaeria nodorum (strain SN15 / ATCC MYA-4574 / FGSC 10173) (Glume blotch fungus).